Consider the following 215-residue polypeptide: Glycerol-3-phosphate acyltransferase (215 aa).

Transmembrane regions (helical) follow at residues 3-23 (LILLILTAYLLGSIPTGLWIG), 42-61 (TNTFRILGLKAGAATLLIDI), 68-90 (TLLPVLVGASNISPITIGFFAVL), 110-130 (AGVLLGFAPLYLLFLAAVFVL), 134-154 (LFSMISLASLTASVVAVISVL), and 162-182 (LLPSYDWLLTITIVVLAAIII).

It belongs to the PlsY family. Probably interacts with PlsX.

It localises to the cell membrane. The enzyme catalyses an acyl phosphate + sn-glycerol 3-phosphate = a 1-acyl-sn-glycero-3-phosphate + phosphate. The protein operates within lipid metabolism; phospholipid metabolism. Its function is as follows. Catalyzes the transfer of an acyl group from acyl-phosphate (acyl-PO(4)) to glycerol-3-phosphate (G3P) to form lysophosphatidic acid (LPA). This enzyme utilizes acyl-phosphate as fatty acyl donor, but not acyl-CoA or acyl-ACP. This Streptococcus equi subsp. equi (strain 4047) protein is Glycerol-3-phosphate acyltransferase.